The sequence spans 854 residues: DNA mismatch repair protein MutS (854 aa).

Position 615–622 (615–622 (GPNMGGKS)) interacts with ATP.

It belongs to the DNA mismatch repair MutS family.

This protein is involved in the repair of mismatches in DNA. It is possible that it carries out the mismatch recognition step. This protein has a weak ATPase activity. This is DNA mismatch repair protein MutS from Aliivibrio fischeri (strain MJ11) (Vibrio fischeri).